The sequence spans 590 residues: Putative sodium/calcium exchanger 6 (590 aa).

The N-terminal stretch at methionine 1 to glycine 19 is a signal peptide. The next 11 membrane-spanning stretches (helical) occupy residues isoleucine 97–alanine 117, valine 139–alanine 159, leucine 173–phenylalanine 193, isoleucine 208–valine 228, isoleucine 230–serine 250, proline 368–cysteine 388, proline 397–phenylalanine 417, isoleucine 440–valine 460, alanine 499–isoleucine 519, tyrosine 535–alanine 555, and leucine 568–valine 588.

This sequence belongs to the Ca(2+):cation antiporter (CaCA) (TC 2.A.19) family.

It is found in the membrane. This chain is Putative sodium/calcium exchanger 6 (ncx-6), found in Caenorhabditis elegans.